The following is a 206-amino-acid chain: dCTP deaminase, dUMP-forming (206 aa).

DCTP is bound by residues 117-122 (RSSFGR), D135, 143-145 (TLE), Q163, Y177, K184, and Q188. The active-site Proton donor/acceptor is E145.

This sequence belongs to the dCTP deaminase family. In terms of assembly, homotrimer.

The enzyme catalyses dCTP + 2 H2O = dUMP + NH4(+) + diphosphate. The protein operates within pyrimidine metabolism; dUMP biosynthesis; dUMP from dCTP: step 1/1. Its function is as follows. Bifunctional enzyme that catalyzes both the deamination of dCTP to dUTP and the hydrolysis of dUTP to dUMP without releasing the toxic dUTP intermediate. The protein is dCTP deaminase, dUMP-forming of Methanococcus maripaludis (strain C5 / ATCC BAA-1333).